The chain runs to 229 residues: Heptaprenylglyceryl phosphate synthase (229 aa).

Lysine 12 contacts sn-glycerol 1-phosphate. Residues aspartate 14 and serine 40 each coordinate Mg(2+). Sn-glycerol 1-phosphate-binding positions include 159–164 (YLEYSG), glycine 189, and 209–210 (GN).

The protein belongs to the GGGP/HepGP synthase family. Group I subfamily. Homodimer. Requires Mg(2+) as cofactor.

The catalysed reaction is sn-glycerol 1-phosphate + all-trans-heptaprenyl diphosphate = 3-heptaprenyl-sn-glycero-1-phosphate + diphosphate. Its pathway is membrane lipid metabolism; glycerophospholipid metabolism. Its function is as follows. Prenyltransferase that catalyzes in vivo the transfer of the heptaprenyl moiety of heptaprenyl pyrophosphate (HepPP; 35 carbon atoms) to the C3 hydroxyl of sn-glycerol-1-phosphate (G1P), producing heptaprenylglyceryl phosphate (HepGP). This reaction is an ether-bond-formation step in the biosynthesis of archaea-type G1P-based membrane lipids found in Bacillales. This Bacillus cereus (strain B4264) protein is Heptaprenylglyceryl phosphate synthase.